The following is a 370-amino-acid chain: Ni-sirohydrochlorin a,c-diamide reductive cyclase complex, component CfbD (370 aa).

The protein belongs to the NifD/NifK/NifE/NifN family. As to quaternary structure, homodimer or monomer. The Ni-sirohydrochlorin a,c-diamide reductive cyclase complex is composed of a NifH homolog component CfbC and a NifD homolog component CfbD. Requires [4Fe-4S] cluster as cofactor.

It catalyses the reaction Ni-sirohydrochlorin a,c-diamide + 3 AH2 + ATP + H2O = 15,17(3)-seco-F430-17(3)-acid + 3 A + ADP + phosphate. Functionally, involved in the biosynthesis of the unique nickel-containing tetrapyrrole coenzyme F430, the prosthetic group of methyl-coenzyme M reductase (MCR), which plays a key role in methanogenesis and anaerobic methane oxidation. Catalyzes both the six-electron reduction of the tetrahydroporphyrin ring system and the gamma-lactamization of the c-acetamide side chain of Ni-sirohydrochlorin a,c-diamide to yield 15,17(3)-seco-F430-17(3)-acid (seco-F430), the last intermediate in the biosynthesis of the coenzyme F430. The sequence is that of Ni-sirohydrochlorin a,c-diamide reductive cyclase complex, component CfbD from Methanosarcina acetivorans (strain ATCC 35395 / DSM 2834 / JCM 12185 / C2A).